We begin with the raw amino-acid sequence, 361 residues long: MLCLGIESSCDETALALVEDGRLLHSVLSTQADMHALFGGVVPELASREHYRYIGPLFDELMRRSDKSNEEIDLVAVARGPGLLGSLLVGVAFAKGLAFSLGARFLGVNHLQAHLLAAGLEQPLKFPALGLLVSGGHTHLYRMETPWNCLPLGRTLDDAAGEAFDKVGKVLGLAYPGGRLMDALAGEGRADGIAFPRPYLDNDNLDFSFSGLKTAASTYVQQHFAGMTWPRPLGSTAAAPQELKDCCAAFNLAVVDTLCTKATRALDRNPQLKYLILAGGVACNSLLRQRVTELMERRGGQAIIPGPHLCTDNAAMIAYAGWLLGKEGYYHQLNMETVPRGRALPDDMRRCREYAEDLSET.

The Fe cation site is built by His-110 and His-114. Substrate is bound by residues 132–136 (LVSGG), Asp-165, Gly-178, Asp-182, and Asn-284. Residue Asp-312 coordinates Fe cation.

Belongs to the KAE1 / TsaD family. Fe(2+) serves as cofactor.

Its subcellular location is the cytoplasm. The enzyme catalyses L-threonylcarbamoyladenylate + adenosine(37) in tRNA = N(6)-L-threonylcarbamoyladenosine(37) in tRNA + AMP + H(+). Required for the formation of a threonylcarbamoyl group on adenosine at position 37 (t(6)A37) in tRNAs that read codons beginning with adenine. Is involved in the transfer of the threonylcarbamoyl moiety of threonylcarbamoyl-AMP (TC-AMP) to the N6 group of A37, together with TsaE and TsaB. TsaD likely plays a direct catalytic role in this reaction. In Desulfovibrio desulfuricans (strain ATCC 27774 / DSM 6949 / MB), this protein is tRNA N6-adenosine threonylcarbamoyltransferase.